The following is a 391-amino-acid chain: Formate-dependent phosphoribosylglycinamide formyltransferase (391 aa).

Residues 20–21 (EL) and Glu-80 each bind N(1)-(5-phospho-beta-D-ribosyl)glycinamide. Residues Arg-112, Lys-153, 158–163 (SSGKGQ), 193–196 (EGFI), and Glu-201 each bind ATP. Positions 117–306 (RLAAETLGLP…EFALHVRAIL (190 aa)) constitute an ATP-grasp domain. 2 residues coordinate Mg(2+): Glu-265 and Glu-277. N(1)-(5-phospho-beta-D-ribosyl)glycinamide-binding positions include Asp-284, Lys-354, and 361-362 (RR).

This sequence belongs to the PurK/PurT family. As to quaternary structure, homodimer.

The catalysed reaction is N(1)-(5-phospho-beta-D-ribosyl)glycinamide + formate + ATP = N(2)-formyl-N(1)-(5-phospho-beta-D-ribosyl)glycinamide + ADP + phosphate + H(+). Its pathway is purine metabolism; IMP biosynthesis via de novo pathway; N(2)-formyl-N(1)-(5-phospho-D-ribosyl)glycinamide from N(1)-(5-phospho-D-ribosyl)glycinamide (formate route): step 1/1. In terms of biological role, involved in the de novo purine biosynthesis. Catalyzes the transfer of formate to 5-phospho-ribosyl-glycinamide (GAR), producing 5-phospho-ribosyl-N-formylglycinamide (FGAR). Formate is provided by PurU via hydrolysis of 10-formyl-tetrahydrofolate. This chain is Formate-dependent phosphoribosylglycinamide formyltransferase, found in Shewanella sp. (strain MR-7).